We begin with the raw amino-acid sequence, 377 residues long: Presenilin-associated rhomboid-like protein, mitochondrial (377 aa).

Residues 1 to 50 (MALYSWVQRGWRCGQTWAPLLGGGYRELSATQARQLLGRRFNLLLQQKCG) constitute a mitochondrion transit peptide. Over 51–95 (FRKAPRKVEPRRSDTGSSGEAYKRSALIPPLEETVFYPSPYPVRT) the chain is Mitochondrial matrix. A phosphoserine mark is found at Ser-63 and Ser-68. The chain crosses the membrane as a helical span at residues 96 to 116 (LLKPFFFTVGFTGCAFGSAAI). Residues 117–165 (WQYESLKSRVQSYFDGIKADWLDSIRPQKEGNLRKEINKWWNSLSDGQR) lie on the Mitochondrial intermembrane side of the membrane. The helical transmembrane segment at 166 to 186 (TVTGIIAANALVFCLWRVPSL) threads the bilayer. Topologically, residues 187-214 (HRTMIRYFTSNPASKVLCSPMLLSTFSH) are mitochondrial matrix. A helical membrane pass occupies residues 215 to 235 (FSLFHMAANMYVLWSFSTSIV). At 236 to 242 (NILGQEQ) the chain is on the mitochondrial intermembrane side. Residues 243–263 (FVAVYLSAGVISNFVSYVCKV) form a helical membrane-spanning segment. Over 264-268 (ATGRY) the chain is Mitochondrial matrix. A helical membrane pass occupies residues 269 to 289 (GPSLGASGAIMTVLAAVCTKI). Ser-275 (nucleophile) is an active-site residue. The Mitochondrial intermembrane segment spans residues 290–293 (PEGR). The helical transmembrane segment at 294–314 (LAIIFLPVFTFTAGNALKAII) threads the bilayer. At 315 to 331 (AMDTAGMILGWKFFDHA) the chain is on the mitochondrial matrix side. A helical membrane pass occupies residues 332–352 (AHLGGALFGIWYITYGHELIW). His-333 is an active-site residue. Over 353 to 377 (KNREPLVKIWHEIRTNGPKKGGGSK) the chain is Mitochondrial intermembrane.

Belongs to the peptidase S54 family. Interacts with PSEN1 and PSEN2. Binds OPA1. Post-translationally, P-beta is proteolytically processed (beta-cleavage) in a PARL-dependent manner.

It is found in the mitochondrion inner membrane. The protein resides in the nucleus. It carries out the reaction Cleaves type-1 transmembrane domains using a catalytic dyad composed of serine and histidine that are contributed by different transmembrane domains.. Required for the control of apoptosis during postnatal growth. Essential for proteolytic processing of an antiapoptotic form of OPA1 which prevents the release of mitochondrial cytochrome c in response to intrinsic apoptotic signals. Required for the maturation of PINK1 into its 52kDa mature form after its cleavage by mitochondrial-processing peptidase (MPP). Promotes cleavage of serine/threonine-protein phosphatase PGAM5 in damaged mitochondria in response to loss of mitochondrial membrane potential. Mediates differential cleavage of PINK1 and PGAM5 depending on the health status of mitochondria, disassociating from PINK1 and associating with PGAM5 in response to mitochondrial membrane potential loss. Required for processing of CLPB into a form with higher protein disaggregase activity by removing an autoinhibitory N-terminal peptide. Promotes processing of DIABLO/SMAC in the mitochondrion which is required for DIABLO apoptotic activity. Also required for cleavage of STARD7 and TTC19. Promotes changes in mitochondria morphology regulated by phosphorylation of P-beta domain. The sequence is that of Presenilin-associated rhomboid-like protein, mitochondrial from Rattus norvegicus (Rat).